The following is a 188-amino-acid chain: dCTP deaminase (188 aa).

DCTP is bound by residues 111-116 (KSTYAR), 135-137 (TLE), glutamine 156, tyrosine 170, and glutamine 180. The active-site Proton donor/acceptor is glutamate 137.

Belongs to the dCTP deaminase family. As to quaternary structure, homotrimer.

It catalyses the reaction dCTP + H2O + H(+) = dUTP + NH4(+). The protein operates within pyrimidine metabolism; dUMP biosynthesis; dUMP from dCTP (dUTP route): step 1/2. Functionally, catalyzes the deamination of dCTP to dUTP. The chain is dCTP deaminase from Nitrosomonas europaea (strain ATCC 19718 / CIP 103999 / KCTC 2705 / NBRC 14298).